Here is a 129-residue protein sequence, read N- to C-terminus: Azurin-1 (129 aa).

Residues 1–129 (AECSVDIAGN…LMKGVLKLVD (129 aa)) enclose the Plastocyanin-like domain. Cys3 and Cys26 are joined by a disulfide. Residues His46, Cys112, His117, and Met121 each contribute to the Cu cation site.

The protein resides in the periplasm. Transfers electrons from cytochrome c551 to cytochrome oxidase. The sequence is that of Azurin-1 from Alcaligenes xylosoxydans xylosoxydans (Achromobacter xylosoxidans).